The chain runs to 321 residues: Methionyl-tRNA formyltransferase (321 aa).

111 to 114 serves as a coordination point for (6S)-5,6,7,8-tetrahydrofolate; that stretch reads GLLP.

This sequence belongs to the Fmt family.

The enzyme catalyses L-methionyl-tRNA(fMet) + (6R)-10-formyltetrahydrofolate = N-formyl-L-methionyl-tRNA(fMet) + (6S)-5,6,7,8-tetrahydrofolate + H(+). Functionally, attaches a formyl group to the free amino group of methionyl-tRNA(fMet). The formyl group appears to play a dual role in the initiator identity of N-formylmethionyl-tRNA by promoting its recognition by IF2 and preventing the misappropriation of this tRNA by the elongation apparatus. The chain is Methionyl-tRNA formyltransferase from Chlamydia abortus (strain DSM 27085 / S26/3) (Chlamydophila abortus).